Consider the following 721-residue polypeptide: Methionine--tRNA ligase (721 aa).

A 'HIGH' region motif is present at residues 27–37 (PYANGQIHIGH). Cys-158, Cys-161, Cys-171, and Cys-174 together coordinate Zn(2+). The 'KMSKS' region signature appears at 348-352 (KMSKS). ATP is bound at residue Lys-351. The tRNA-binding domain occupies 615–721 (DFAKIDLRIA…SGAKPGMRVK (107 aa)).

The protein belongs to the class-I aminoacyl-tRNA synthetase family. MetG type 1 subfamily. As to quaternary structure, homodimer. It depends on Zn(2+) as a cofactor.

It is found in the cytoplasm. The enzyme catalyses tRNA(Met) + L-methionine + ATP = L-methionyl-tRNA(Met) + AMP + diphosphate. Its function is as follows. Is required not only for elongation of protein synthesis but also for the initiation of all mRNA translation through initiator tRNA(fMet) aminoacylation. This is Methionine--tRNA ligase from Burkholderia vietnamiensis (strain G4 / LMG 22486) (Burkholderia cepacia (strain R1808)).